Here is a 341-residue protein sequence, read N- to C-terminus: UDP-3-O-acylglucosamine N-acyltransferase (341 aa).

His-241 (proton acceptor) is an active-site residue.

It belongs to the transferase hexapeptide repeat family. LpxD subfamily. Homotrimer.

The catalysed reaction is a UDP-3-O-[(3R)-3-hydroxyacyl]-alpha-D-glucosamine + a (3R)-hydroxyacyl-[ACP] = a UDP-2-N,3-O-bis[(3R)-3-hydroxyacyl]-alpha-D-glucosamine + holo-[ACP] + H(+). It participates in bacterial outer membrane biogenesis; LPS lipid A biosynthesis. Its function is as follows. Catalyzes the N-acylation of UDP-3-O-acylglucosamine using 3-hydroxyacyl-ACP as the acyl donor. Is involved in the biosynthesis of lipid A, a phosphorylated glycolipid that anchors the lipopolysaccharide to the outer membrane of the cell. This is UDP-3-O-acylglucosamine N-acyltransferase from Christiangramia forsetii (strain DSM 17595 / CGMCC 1.15422 / KT0803) (Gramella forsetii).